The sequence spans 426 residues: Casein kinase I (426 aa).

A Protein kinase domain is found at 9–278; the sequence is YRISRKIGGG…LRKLLREMFV (270 aa). ATP-binding positions include 15–23 and lysine 38; that span reads IGGGSFGEI. Aspartate 128 serves as the catalytic Proton acceptor. Disordered regions lie at residues 340–360 and 377–426; these read TTTT…TVSN and PSYN…PPAK. Over residues 345–360 the composition is skewed to polar residues; that stretch reads SSSQPSNVKNISTVSN. Positions 386-404 are enriched in low complexity; it reads QSPQQTTTTTSSSNPNQTT. Positions 414–426 are enriched in polar residues; the sequence is PQSSSTTTKPPAK.

It belongs to the protein kinase superfamily. CK1 Ser/Thr protein kinase family. Casein kinase I subfamily. As to quaternary structure, monomer. Autophosphorylated.

It localises to the cytoplasm. Its subcellular location is the nucleus. The catalysed reaction is L-seryl-[protein] + ATP = O-phospho-L-seryl-[protein] + ADP + H(+). The enzyme catalyses L-threonyl-[protein] + ATP = O-phospho-L-threonyl-[protein] + ADP + H(+). Functionally, casein kinases are operationally defined by their preferential utilization of acidic proteins such as caseins as substrates. Can phosphorylate a large number of proteins. May have a role in DNA repair mechanism and support vegetative growth of the cells. The sequence is that of Casein kinase I (cak1-1) from Dictyostelium discoideum (Social amoeba).